Reading from the N-terminus, the 871-residue chain is Alanine--tRNA ligase (871 aa).

Zn(2+)-binding residues include histidine 561, histidine 565, cysteine 665, and histidine 669.

Belongs to the class-II aminoacyl-tRNA synthetase family. It depends on Zn(2+) as a cofactor.

It is found in the cytoplasm. The enzyme catalyses tRNA(Ala) + L-alanine + ATP = L-alanyl-tRNA(Ala) + AMP + diphosphate. Catalyzes the attachment of alanine to tRNA(Ala) in a two-step reaction: alanine is first activated by ATP to form Ala-AMP and then transferred to the acceptor end of tRNA(Ala). Also edits incorrectly charged Ser-tRNA(Ala) and Gly-tRNA(Ala) via its editing domain. The sequence is that of Alanine--tRNA ligase from Dehalococcoides mccartyi (strain CBDB1).